A 275-amino-acid chain; its full sequence is Pyridoxal phosphate homeostasis protein (275 aa).

Ser-6 bears the Phosphoserine mark. Lys-47 is modified (N6-(pyridoxal phosphate)lysine). Residue Tyr-69 is modified to Phosphotyrosine. At Lys-125 the chain carries N6-succinyllysine. Ser-226 and Ser-244 each carry phosphoserine.

Belongs to the pyridoxal phosphate-binding protein YggS/PROSC family.

Its function is as follows. Pyridoxal 5'-phosphate (PLP)-binding protein, which may be involved in intracellular homeostatic regulation of pyridoxal 5'-phosphate (PLP), the active form of vitamin B6. The polypeptide is Pyridoxal phosphate homeostasis protein (Pongo abelii (Sumatran orangutan)).